Here is a 407-residue protein sequence, read N- to C-terminus: MFSKIIQSYAKGNLIVQICIGIVLGILIGISSKEISEIANLLGILFTSALKAIAPMLVFILILTSICTKDFSQSGAKIKNIIILYIVGTFLASACAVLANFFFPVKLVLDGVQTATNSSPTHMSEIFKDLLFKIVDNPINALSSGNYLGILTWAIAGGIALKHCSNEAKQVFIDINEGVLKIVKFIVKLAPFGIFGLVANSVAQTGAQGLLSYVKLLILLVATMLFVTFVINALIVFFYTRKNPFPLIFICLRHSAFFAFFTRSSAANIPVNMALCAKLGIDKEFYGISIPLGATINMAGAAVTIAILSLTAANTVGIEISLLQAFLLSIIATFAACGASGVAGGSLLLIPLACSLFNIDYDIAMKVVAIGFIIGVIQDSVETALNSSTDVLFTAICSKNELNYNIK.

9 consecutive transmembrane segments (helical) span residues 12-32, 42-62, 81-101, 141-161, 179-199, 218-238, 245-267, 288-308, and 330-350; these read GNLIVQICIGIVLGILIGISS, LGILFTSALKAIAPMLVFILI, IIILYIVGTFLASACAVLANF, ALSSGNYLGILTWAIAGGIAL, VLKIVKFIVKLAPFGIFGLVA, ILLVATMLFVTFVINALIVFF, FPLIFICLRHSAFFAFFTRSSAA, ISIPLGATINMAGAAVTIAIL, and IIATFAACGASGVAGGSLLLI.

It belongs to the dicarboxylate/amino acid:cation symporter (DAACS) (TC 2.A.23) family.

It is found in the cell inner membrane. The enzyme catalyses L-serine(in) + Na(+)(in) = L-serine(out) + Na(+)(out). It carries out the reaction L-threonine(in) + Na(+)(in) = L-threonine(out) + Na(+)(out). Functionally, involved in the import of serine and threonine into the cell, with the concomitant import of sodium (symport system). The chain is Serine/threonine transporter SstT from Campylobacter jejuni subsp. jejuni serotype O:23/36 (strain 81-176).